A 472-amino-acid chain; its full sequence is Glutamate--tRNA ligase (472 aa).

A 'HIGH' region motif is present at residues 9 to 19 (PSPTGYLHVGG). The Zn(2+) site is built by Cys98, Cys100, Cys125, and His127. Positions 237–241 (KLSKR) match the 'KMSKS' region motif. Residue Lys240 participates in ATP binding.

This sequence belongs to the class-I aminoacyl-tRNA synthetase family. Glutamate--tRNA ligase type 1 subfamily. Monomer. It depends on Zn(2+) as a cofactor.

It localises to the cytoplasm. It catalyses the reaction tRNA(Glu) + L-glutamate + ATP = L-glutamyl-tRNA(Glu) + AMP + diphosphate. Catalyzes the attachment of glutamate to tRNA(Glu) in a two-step reaction: glutamate is first activated by ATP to form Glu-AMP and then transferred to the acceptor end of tRNA(Glu). This Klebsiella pneumoniae (strain 342) protein is Glutamate--tRNA ligase.